A 333-amino-acid polypeptide reads, in one-letter code: tRNA-dihydrouridine(16) synthase (333 aa).

FMN contacts are provided by residues 19-21 (PMQ) and Gln80. Cys110 acts as the Proton donor in catalysis. FMN-binding positions include Lys151, 211–213 (NGD), and 235–236 (GR).

The protein belongs to the Dus family. DusC subfamily. FMN serves as cofactor.

The enzyme catalyses 5,6-dihydrouridine(16) in tRNA + NADP(+) = uridine(16) in tRNA + NADPH + H(+). It catalyses the reaction 5,6-dihydrouridine(16) in tRNA + NAD(+) = uridine(16) in tRNA + NADH + H(+). Catalyzes the synthesis of 5,6-dihydrouridine (D), a modified base found in the D-loop of most tRNAs, via the reduction of the C5-C6 double bond in target uridines. Specifically modifies U16 in tRNAs. This Neisseria meningitidis serogroup B (strain ATCC BAA-335 / MC58) protein is tRNA-dihydrouridine(16) synthase.